Consider the following 130-residue polypeptide: MSMQDTLADMFTRIRNAQMAKKVQVEIPASKAKEAVAKVLKDEGYIAGYEVTGDKKPVMTVELKYYEGSPVIEKIARVSRPGLRVYKSAGEIPKVKDGLGVMIVSTNQGIISDRAARKANIGGELICEVS.

Belongs to the universal ribosomal protein uS8 family. In terms of assembly, part of the 30S ribosomal subunit. Contacts proteins S5 and S12.

Its function is as follows. One of the primary rRNA binding proteins, it binds directly to 16S rRNA central domain where it helps coordinate assembly of the platform of the 30S subunit. This is Small ribosomal subunit protein uS8 from Alcanivorax borkumensis (strain ATCC 700651 / DSM 11573 / NCIMB 13689 / SK2).